A 165-amino-acid polypeptide reads, in one-letter code: Small ribosomal subunit protein uS13 (165 aa).

The segment at 139-165 is disordered; it reads GMTIGVARKKAAQPQSQQSSSQQQKSS. A compositionally biased stretch (low complexity) spans 153–165; sequence QSQQSSSQQQKSS.

The protein belongs to the universal ribosomal protein uS13 family. In terms of assembly, part of the 30S ribosomal subunit. Forms a loose heterodimer with protein S19. Forms two bridges to the 50S subunit in the 70S ribosome.

Its function is as follows. Located at the top of the head of the 30S subunit, it contacts several helices of the 16S rRNA. In the 70S ribosome it contacts the 23S rRNA (bridge B1a) and protein L5 of the 50S subunit (bridge B1b), connecting the 2 subunits; these bridges are implicated in subunit movement. The sequence is that of Small ribosomal subunit protein uS13 from Saccharolobus solfataricus (strain ATCC 35092 / DSM 1617 / JCM 11322 / P2) (Sulfolobus solfataricus).